The primary structure comprises 699 residues: MTAQLQSESTSKIVLVTGGAGYIGSHTVVELIENGYDCVVADNLSNSTYDSVARLEVLTKHHIPFYEVDLCDRKGLEKVFKEYKIDSVIHFAGLKAVGESTQIPLRYYHNNILGTVVLLELMQQYNVSKFVFSSSATVYGDATRFPNMIPIPEECPLGPTNPYGHTKYAIENILNDLYNSDKKSWKFAILRYFNPIGAHPSGLIGEDPLGIPNNLLPYMAQVAVGRREKLYIFGDDYDSRDGTPIRDYIHVVDLAKGHIAALQYLEAYNENEGLCREWNLGSGKGSTVFEVYHAFCKASGIDLPYKVTGRRAGDVLNLTAKPDRAKRELKWQTELQVEDSCKDLWKWTTENPFGYQLRGVEARFSAEDMRYDARFVTIGAGTRFQATFANLGASIVDLKVNGQSVVLGYENEEGYLNPDSAYIGATIGRYANRISKGKFSLCNKDYQLTVNNGVNANHSSIGSFHRKRFLGPIIQNPSKDVFTAEYMLIDNEKDTEFPGDLLVTIQYTVNVAQKSLEMVYKGKLTAGEATPINLTNHSYFNLNKPYGDTIEGTEIMVRSKKSVDVDKNMIPTGNIVDREIATFNSTKPTVLGPKNPQFDCCFVVDENAKPSQINTLNNELTLIVKAFHPDSNITLEVLSTEPTYQFYTGDFLSAGYEARQGFAIEPGRYIDAINQENWKDCVTLKNGETYGSKIVYRFS.

The segment at 1 to 357 (MTAQLQSEST…TTENPFGYQL (357 aa)) is galactowaldenase. 13–44 (IVLVTGGAGYIGSHTVVELIENGYDCVVADNL) contacts NAD(+). Residues 358–699 (RGVEARFSAE…YGSKIVYRFS (342 aa)) form a mutarotase region. His-537 acts as the For mutarotase activity in catalysis. Ser-562 is subject to Phosphoserine.

In the N-terminal section; belongs to the NAD(P)-dependent epimerase/dehydratase family. It in the C-terminal section; belongs to the aldose epimerase family. NAD(+) serves as cofactor.

It catalyses the reaction UDP-alpha-D-glucose = UDP-alpha-D-galactose. The catalysed reaction is alpha-D-glucose = beta-D-glucose. It functions in the pathway carbohydrate metabolism; galactose metabolism. Its pathway is carbohydrate metabolism; hexose metabolism. Its function is as follows. Mutarotase converts alpha-aldose to the beta-anomer. It is active on D-glucose, L-arabinose, D-xylose, D-galactose, maltose and lactose. The polypeptide is Bifunctional protein GAL10 (GAL10) (Saccharomyces cerevisiae (strain ATCC 204508 / S288c) (Baker's yeast)).